The chain runs to 333 residues: Glycerol-3-phosphate dehydrogenase [NAD(P)+] (333 aa).

Residues serine 10, tryptophan 11, histidine 31, arginine 32, and lysine 105 each coordinate NADPH. Residues lysine 105, glycine 136, and serine 138 each contribute to the sn-glycerol 3-phosphate site. Alanine 140 serves as a coordination point for NADPH. 5 residues coordinate sn-glycerol 3-phosphate: lysine 191, aspartate 244, serine 254, arginine 255, and asparagine 256. Lysine 191 (proton acceptor) is an active-site residue. An NADPH-binding site is contributed by arginine 255. Positions 279 and 281 each coordinate NADPH.

Belongs to the NAD-dependent glycerol-3-phosphate dehydrogenase family.

It is found in the cytoplasm. The catalysed reaction is sn-glycerol 3-phosphate + NAD(+) = dihydroxyacetone phosphate + NADH + H(+). The enzyme catalyses sn-glycerol 3-phosphate + NADP(+) = dihydroxyacetone phosphate + NADPH + H(+). Its pathway is membrane lipid metabolism; glycerophospholipid metabolism. Functionally, catalyzes the reduction of the glycolytic intermediate dihydroxyacetone phosphate (DHAP) to sn-glycerol 3-phosphate (G3P), the key precursor for phospholipid synthesis. This is Glycerol-3-phosphate dehydrogenase [NAD(P)+] from Pelodictyon phaeoclathratiforme (strain DSM 5477 / BU-1).